The following is a 406-amino-acid chain: MAENGTDCEQRRVGMPKEQNNGSFQDPSFMCNRKRRDREERQSIVLWRKPLITLQYFILEVLINLKEWSVRLWHRRMMVVSVLLLLAVLSVAYYIEGEHQQCVQYIEKKCLWCAYWVGLGILSSVGLGTGLHTFLLYLGPHIASVTIAAYECNSVNFPEPPYPDEIICPDEEGTEGAISLWTIISKVRLEACMWGAGTAIGELPPYFMARAARLSGVETDDEEYAEFEEMLEHAQTAQDFATRAKLTVQNLVQKVGFLGILACASIPNPLFDLAGITCGHFLVPFWTFFGATLIGKAIIKMHIQKLFVIITFSKHIVEQMVSLIGVIPSIGPSLQKPFQEYLEAQRKKLHHKGDSGTPQSENWLSWAFEKLVIIMVFYFILSIINSMAQSYAKRVQQKKLSVEKTK.

The segment at methionine 1–glycine 22 is disordered. The Cytoplasmic portion of the chain corresponds to methionine 1–glutamine 42. Residues serine 43–isoleucine 63 traverse the membrane as a helical segment. The Extracellular segment spans residues asparagine 64–arginine 76. A helical membrane pass occupies residues methionine 77 to glycine 97. Residues glutamate 98 to cysteine 110 are Cytoplasmic-facing. The helical transmembrane segment at leucine 111–leucine 131 threads the bilayer. The Extracellular portion of the chain corresponds to histidine 132–asparagine 250. The VTT domain stretch occupies residues glycine 173–isoleucine 316. A helical transmembrane segment spans residues leucine 251 to phenylalanine 271. The Cytoplasmic portion of the chain corresponds to aspartate 272 to leucine 273. Residues alanine 274–isoleucine 294 traverse the membrane as a helical segment. Residues glycine 295–leucine 306 lie on the Extracellular side of the membrane. Residues phenylalanine 307–isoleucine 327 traverse the membrane as a helical segment. Residues proline 328–tryptophan 363 are Cytoplasmic-facing. A helical membrane pass occupies residues leucine 364 to isoleucine 384. At asparagine 385–lysine 406 the chain is on the extracellular side.

It belongs to the VMP1 family.

It is found in the endoplasmic reticulum-Golgi intermediate compartment membrane. Its subcellular location is the cell membrane. The protein localises to the vacuole membrane. The protein resides in the endoplasmic reticulum membrane. It carries out the reaction a 1,2-diacyl-sn-glycero-3-phospho-L-serine(in) = a 1,2-diacyl-sn-glycero-3-phospho-L-serine(out). It catalyses the reaction cholesterol(in) = cholesterol(out). The catalysed reaction is a 1,2-diacyl-sn-glycero-3-phosphocholine(in) = a 1,2-diacyl-sn-glycero-3-phosphocholine(out). The enzyme catalyses a 1,2-diacyl-sn-glycero-3-phosphoethanolamine(in) = a 1,2-diacyl-sn-glycero-3-phosphoethanolamine(out). Its function is as follows. Phospholipid scramblase involved in lipid homeostasis and membrane dynamics processes. Has phospholipid scramblase activity toward cholesterol and phosphatidylserine, as well as phosphatidylethanolamine and phosphatidylcholine. Required for autophagosome formation: participates in early stages of autophagosome biogenesis at the endoplasmic reticulum (ER) membrane by reequilibrating the leaflets of the ER as lipids are extracted by atg2 (atg2a or atg2b) to mediate autophagosome assembly. In addition to autophagy, involved in other processes in which phospholipid scramblase activity is required. Modulates ER contacts with lipid droplets, mitochondria and endosomes. This chain is Vacuole membrane protein 1, found in Xenopus laevis (African clawed frog).